Here is a 392-residue protein sequence, read N- to C-terminus: Galactokinase (392 aa).

Alpha-D-galactose contacts are provided by arginine 37, glutamate 43, histidine 44, and aspartate 46. Residues glycine 136, glycine 138, serine 140, and serine 141 each contribute to the ATP site. Aspartate 186 serves as a coordination point for alpha-D-galactose. Residue aspartate 186 is the Proton acceptor of the active site. Serine 230 is modified (phosphoserine). An alpha-D-galactose-binding site is contributed by tyrosine 236.

Belongs to the GHMP kinase family. GalK subfamily. As to quaternary structure, homodimer.

It carries out the reaction alpha-D-galactose + ATP = alpha-D-galactose 1-phosphate + ADP + H(+). It functions in the pathway carbohydrate metabolism; galactose metabolism. Catalyzes the transfer of a phosphate from ATP to alpha-D-galactose and participates in the first committed step in the catabolism of galactose. This Bos taurus (Bovine) protein is Galactokinase (GALK1).